The primary structure comprises 59 residues: MAFDKKLLDIVACPVCKGKLEYDKTTQQLICKADKLAYPITEGIPVLLENRAVPLTESV.

This sequence belongs to the UPF0434 family.

The polypeptide is UPF0434 protein Sbal_1685 (Shewanella baltica (strain OS155 / ATCC BAA-1091)).